The chain runs to 212 residues: Uracil phosphoribosyltransferase (212 aa).

5-phospho-alpha-D-ribose 1-diphosphate-binding positions include Arg78, Arg103, and 130 to 138 (DPMLATGSS). Residues Ile193 and 198–200 (GDA) contribute to the uracil site. A 5-phospho-alpha-D-ribose 1-diphosphate-binding site is contributed by Asp199.

This sequence belongs to the UPRTase family. Requires Mg(2+) as cofactor.

The enzyme catalyses UMP + diphosphate = 5-phospho-alpha-D-ribose 1-diphosphate + uracil. The protein operates within pyrimidine metabolism; UMP biosynthesis via salvage pathway; UMP from uracil: step 1/1. Allosterically activated by GTP. Its function is as follows. Catalyzes the conversion of uracil and 5-phospho-alpha-D-ribose 1-diphosphate (PRPP) to UMP and diphosphate. The chain is Uracil phosphoribosyltransferase from Pseudomonas savastanoi pv. phaseolicola (strain 1448A / Race 6) (Pseudomonas syringae pv. phaseolicola (strain 1448A / Race 6)).